A 66-amino-acid polypeptide reads, in one-letter code: 14-3-3-like protein 2 (66 aa).

Belongs to the 14-3-3 family.

The chain is 14-3-3-like protein 2 from Pseudotsuga menziesii (Douglas-fir).